The primary structure comprises 265 residues: Arcelin-1 (265 aa).

A signal peptide spans 1–21 (MASSNLLTLALFLVLLTHANS). Residues N33, N89, and N128 are each glycosylated (N-linked (GlcNAc...) asparagine). A disulfide bridge links C165 with C201.

It belongs to the leguminous lectin family. Homodimer.

Seed storage. This carbohydrate-binding lectin has toxic effects on an important bean bruchid pest, Z.subfasciatus. Antibiosis properties of legume lectins are proposed to be due to the lysis of epithelial cells of the intestine by binding to the carbohydrate moieties of these proteins. The protein is Arcelin-1 (ARC1) of Phaseolus vulgaris (Kidney bean).